The chain runs to 170 residues: MRCPFCGTQDTKVVDSRLVSEGAQVRRRRTCIHCQERFTTFEVAELQMPKLIKSDGSREAFDEDKLRNGIIKAIEKRPVSIEAVETAITRIKEKMQATGERELPSRWTGEAVMEELQRLDQVAYVRFASVYRSFKDISEFREAIDRLESHSVSIPKSKKTAPESKKEDQA.

The segment at 3–34 (CPFCGTQDTKVVDSRLVSEGAQVRRRRTCIHC) is a zinc-finger region. The ATP-cone domain occupies 49 to 139 (PKLIKSDGSR…VYRSFKDISE (91 aa)). The segment at 151-170 (SVSIPKSKKTAPESKKEDQA) is disordered. The span at 160–170 (TAPESKKEDQA) shows a compositional bias: basic and acidic residues.

Belongs to the NrdR family. Zn(2+) is required as a cofactor.

In terms of biological role, negatively regulates transcription of bacterial ribonucleotide reductase nrd genes and operons by binding to NrdR-boxes. The chain is Transcriptional repressor NrdR from Marinomonas sp. (strain MWYL1).